Reading from the N-terminus, the 1187-residue chain is DNA-directed RNA polymerase subunit beta (1187 aa).

Belongs to the RNA polymerase beta chain family. The RNAP catalytic core consists of 2 alpha, 1 beta, 1 beta' and 1 omega subunit. When a sigma factor is associated with the core the holoenzyme is formed, which can initiate transcription.

The catalysed reaction is RNA(n) + a ribonucleoside 5'-triphosphate = RNA(n+1) + diphosphate. DNA-dependent RNA polymerase catalyzes the transcription of DNA into RNA using the four ribonucleoside triphosphates as substrates. The chain is DNA-directed RNA polymerase subunit beta from Streptococcus mutans serotype c (strain ATCC 700610 / UA159).